We begin with the raw amino-acid sequence, 223 residues long: Ribonuclease DdI (223 aa).

The signal sequence occupies residues 1 to 25 (MRLIAALLSVLLIASTAQSTVTIYE). An intrachain disulfide couples C46 to C51. Active-site residues include H63, E113, and H117. A disulfide bridge connects residues C78 and C120. N144 carries an N-linked (GlcNAc...) asparagine glycan. Cystine bridges form between C183-C213 and C194-C205.

This sequence belongs to the RNase T2 family.

It localises to the lysosome. The catalysed reaction is a ribonucleotidyl-ribonucleotide-RNA + H2O = a 3'-end 3'-phospho-ribonucleotide-RNA + a 5'-end dephospho-ribonucleoside-RNA + H(+). Inhibited by Cu(2+) and Zn(2+). In terms of biological role, releases mononucleotides from RNA in the order of 3'-GMP &gt; 3'-UMP &gt; 3'-AMP &gt; 3'-CMP. The protein is Ribonuclease DdI (ddiA) of Dictyostelium discoideum (Social amoeba).